An 822-amino-acid polypeptide reads, in one-letter code: uncharacterized protein (822 aa).

Residues 1-13 (MCHNSVRSGNKAG) are Cytoplasmic-facing. The helical transmembrane segment at 14-34 (FLGIKFGSALLSIATGAIAIA) threads the bilayer. The Extracellular portion of the chain corresponds to 35 to 44 (LLCKFHDHEA). Residues 45-65 (VLIVIVCSTLLYGIPSLISFI) form a helical membrane-spanning segment. Topologically, residues 66–76 (TETVFAPSKFH) are cytoplasmic. Residues 77–97 (IGYFYNVLNFALPLITMGCTV) traverse the membrane as a helical segment. Residues 98 to 120 (DYFHNTLRSPISVQSESHRVYIT) lie on the Extracellular side of the membrane. The chain crosses the membrane as a helical span at residues 121 to 141 (TLDSLLIFTLFINGIQLGFFL). Over 142–822 (KDGNANNFGS…PVEELVSPSK (681 aa)) the chain is Cytoplasmic. Residues 271 to 290 (RNTQQATKVPTEKKSNHRSS) are disordered. Position 690 is a phosphoserine (Ser-690). Residues 698–712 (TLQSSHSPTKSTSGN) are compositionally biased toward polar residues. 2 disordered regions span residues 698 to 728 (TLQSSHSPTKSTSGNSRRDSLNNDRTQSTVN) and 751 to 783 (NGEEPVLDTPQSIQSSSSGSEQESAGSGSGYPE). The segment covering 761–776 (QSIQSSSSGSEQESAG) has biased composition (low complexity).

The protein resides in the membrane. This is an uncharacterized protein from Saccharomyces cerevisiae (strain ATCC 204508 / S288c) (Baker's yeast).